The sequence spans 162 residues: Troponin C, skeletal muscle (162 aa).

4 consecutive EF-hand domains span residues E17 to N52, P53 to E88, K93 to H128, and V129 to Q162. Positions 30, 32, 36, 41, 66, 68, 70, 72, 77, 106, 108, 110, 117, 142, 144, 146, 148, and 153 each coordinate Ca(2+).

It belongs to the troponin C family.

Its function is as follows. Troponin is the central regulatory protein of striated muscle contraction. Tn consists of three components: Tn-I which is the inhibitor of actomyosin ATPase, Tn-T which contains the binding site for tropomyosin and Tn-C. The binding of calcium to Tn-C abolishes the inhibitory action of Tn on actin filaments. The sequence is that of Troponin C, skeletal muscle (TNNC2) from Meleagris gallopavo (Wild turkey).